The sequence spans 118 residues: MSTLYDNIGGQPAIEQVVDELHKRIATDSLLAPIFAGTDMAKQRNHLVAFLGQIFEGPKQYGGRPMDKTHAGLNLQQPHFDAIAKHLGEAMAVRGVSAEDTKAALDRVTNMKGAILNK.

Residue His-70 participates in heme binding.

The protein belongs to the truncated hemoglobin family. Group I subfamily. As to quaternary structure, monomer. It depends on heme as a cofactor.

The protein localises to the membrane. This Nostoc sp. (strain MUN 8820) protein is Group 1 truncated hemoglobin GlbN (glbN).